Consider the following 148-residue polypeptide: Universal stress protein A (148 aa).

It belongs to the universal stress protein A family. In terms of assembly, homodimer.

The protein localises to the cytoplasm. Its function is as follows. Required for resistance to DNA-damaging agents. This Yersinia pestis protein is Universal stress protein A (uspA).